We begin with the raw amino-acid sequence, 222 residues long: Ras-related protein RabT1 (222 aa).

37–44 (GDNKTGKS) contributes to the GTP binding site. The Effector region signature appears at 59 to 66 (VSSIGVDF). Residues 85–89 (DVNSC) and 145–148 (NKCD) contribute to the GTP site. At cysteine 219 the chain carries Cysteine methyl ester. Cysteine 219 is lipidated: S-geranylgeranyl cysteine. The propeptide at 220–222 (NIL) is removed in mature form.

It belongs to the small GTPase superfamily. Rab family.

The protein localises to the cell membrane. The protein is Ras-related protein RabT1 (rabT1) of Dictyostelium discoideum (Social amoeba).